The following is a 222-amino-acid chain: tRNA (guanine-N(1)-)-methyltransferase (222 aa).

Residues glycine 110 and 130-135 contribute to the S-adenosyl-L-methionine site; that span reads IGDYVL.

The protein belongs to the RNA methyltransferase TrmD family. As to quaternary structure, homodimer.

It localises to the cytoplasm. The catalysed reaction is guanosine(37) in tRNA + S-adenosyl-L-methionine = N(1)-methylguanosine(37) in tRNA + S-adenosyl-L-homocysteine + H(+). Functionally, specifically methylates guanosine-37 in various tRNAs. The chain is tRNA (guanine-N(1)-)-methyltransferase from Protochlamydia amoebophila (strain UWE25).